A 279-amino-acid polypeptide reads, in one-letter code: Movement protein (279 aa).

The disordered stretch occupies residues 247 to 279 (ESEELNVESPPAAIGSSSASRSEAFRPQVVNGL). Over residues 254 to 268 (ESPPAAIGSSSASRS) the composition is skewed to low complexity.

This sequence belongs to the cucumovirus movement protein family.

Its subcellular location is the host cell junction. The protein resides in the host plasmodesma. In terms of biological role, transports viral genome to neighboring plant cells directly through plasmosdesmata, without any budding. The movement protein allows efficient cell to cell propagation, by bypassing the host cell wall barrier. Acts by forming a tubular structure at the host plasmodesmata, enlarging it enough to allow free passage of virion capsids. This is Movement protein from Cucumis sativus (Cucumber).